Consider the following 309-residue polypeptide: MIKLKSILNFLYNIANKDGFKGYKECRTSAYKNVFDDSSTKSTSKFHLGISDTKNLLSLQNIIGLILIIFAGVLFYAYILQHEWRYVTLSDAQVKRYRISEKKALSLYQLMKDTHELLTKNNIKYWIESGTLLGAVRHQGIIPFDDDLDIGIMHEDEIHFQQILPQFKQLGYRIKHNKIYVICGERCLDIFIFHKEKDKFVHILYDQYPNDFFYENELYPLKKYKFGNIEVYGPFDPIGNLNRQYPEWDKYAIIYSPHSFHLLFLSNIEKKTKFILTPELLKPAQPFGPLKDKVNIVNSANIYNDMDYH.

Positions 9 to 55 (NFLYNIANKDGFKGYKECRTSAYKNVFDDSSTKSTSKFHLGISDTKN) constitute an RPE1 insert domain. A helical membrane pass occupies residues 62 to 82 (IIGLILIIFAGVLFYAYILQH).

The protein belongs to the LicD transferase family.

The protein localises to the membrane. This is an uncharacterized protein from Rickettsia typhi (strain ATCC VR-144 / Wilmington).